A 170-amino-acid chain; its full sequence is Urease accessory protein UreE (170 aa).

Residues 144–170 form a disordered region; sequence GGHSHDDHDHHHGHHEHDHEHHHHHHD. Over residues 146 to 162 the composition is skewed to basic and acidic residues; that stretch reads HSHDDHDHHHGHHEHDH.

This sequence belongs to the UreE family.

It localises to the cytoplasm. Its function is as follows. Involved in urease metallocenter assembly. Binds nickel. Probably functions as a nickel donor during metallocenter assembly. In Brucella anthropi (strain ATCC 49188 / DSM 6882 / CCUG 24695 / JCM 21032 / LMG 3331 / NBRC 15819 / NCTC 12168 / Alc 37) (Ochrobactrum anthropi), this protein is Urease accessory protein UreE.